We begin with the raw amino-acid sequence, 1133 residues long: DNA-directed RNA polymerase III subunit RPC2 (1133 aa).

Lysine 186 serves as a coordination point for RNA. Residue arginine 195 participates in DNA binding. Residue arginine 213 participates in RNA binding. Aspartate 432 lines the DNA pocket. RNA contacts are provided by glutamine 438 and glutamine 692. Aspartate 753 is a binding site for Mg(2+). Residues lysine 896, lysine 904, and lysine 1019 each coordinate RNA. Residues arginine 1039, serine 1040, and arginine 1046 each contribute to the DNA site. Zn(2+)-binding residues include cysteine 1080, cysteine 1083, cysteine 1092, and cysteine 1095. The C4-type zinc finger occupies 1080 to 1095 (CGQCGLLGYSGWCHYC).

This sequence belongs to the RNA polymerase beta chain family. In terms of assembly, component of the RNA polymerase III (Pol III) complex consisting of 17 subunits: a ten-subunit catalytic core composed of POLR3A/RPC1, POLR3B/RPC2, POLR1C/RPAC1, POLR1D/RPAC2, POLR3K/RPC10, POLR2E/RPABC1, POLR2F/RPABC2, POLR2H/RPABC3, POLR2K/RPABC4 and POLR2L/RPABC5; a mobile stalk composed of two subunits POLR3H/RPC8 and CRCP/RPC9, protruding from the core and functioning primarily in transcription initiation; and additional subunits homologous to general transcription factors of the RNA polymerase II machinery, POLR3C/RPC3-POLR3F/RPC6-POLR3G/RPC7 heterotrimer required for transcription initiation and POLR3D/RPC4-POLR3E/RPC5 heterodimer involved in both transcription initiation and termination. Requires Mg(2+) as cofactor.

It is found in the nucleus. Its subcellular location is the cytoplasm. The protein resides in the cytosol. It catalyses the reaction RNA(n) + a ribonucleoside 5'-triphosphate = RNA(n+1) + diphosphate. Its function is as follows. Catalytic core component of RNA polymerase III (Pol III), a DNA-dependent RNA polymerase which synthesizes small non-coding RNAs using the four ribonucleoside triphosphates as substrates. Synthesizes 5S rRNA, snRNAs, tRNAs and miRNAs from at least 500 distinct genomic loci. Pol III-mediated transcription cycle proceeds through transcription initiation, transcription elongation and transcription termination stages. During transcription initiation, Pol III is recruited to DNA promoters type I, II or III with the help of general transcription factors and other specific initiation factors. Once the polymerase has escaped from the promoter it enters the elongation phase during which RNA is actively polymerized, based on complementarity with the template DNA strand. Transcription termination involves the release of the RNA transcript and polymerase from the DNA. Forms Pol III active center together with the largest subunit POLR3A/RPC1. A single-stranded DNA template strand of the promoter is positioned within the central active site cleft of Pol III. Appends one nucleotide at a time to the 3' end of the nascent RNA, with POLR3A/RPC1 contributing a Mg(2+)-coordinating DxDGD motif, and POLR3B/RPC2 participating in the coordination of a second Mg(2+) ion and providing lysine residues believed to facilitate Watson-Crick base pairing between the incoming nucleotide and template base. Typically, Mg(2+) ions direct a 5' nucleoside triphosphate to form a phosphodiester bond with the 3' hydroxyl of the preceding nucleotide of the nascent RNA, with the elimination of pyrophosphate. Pol III plays a key role in sensing and limiting infection by intracellular bacteria and DNA viruses. Acts as a nuclear and cytosolic DNA sensor involved in innate immune response. Can sense non-self dsDNA that serves as template for transcription into dsRNA. The non-self RNA polymerase III transcripts, such as Epstein-Barr virus-encoded RNAs (EBERs) induce type I interferon and NF-kappa-B through the RIG-I pathway. The chain is DNA-directed RNA polymerase III subunit RPC2 from Homo sapiens (Human).